The following is a 1700-amino-acid chain: Ras-responsive element-binding protein 1 (1700 aa).

A disordered region spans residues 31 to 63 (TENGGSPQGIKSPMKPPGPNRIGRRNQETKEEK). S36 and S42 each carry phosphoserine. 3 consecutive C2H2-type zinc fingers follow at residues 66 to 88 (YNCP…IRQH), 97 to 119 (HACS…MLVH), and 125 to 147 (YKCT…MKIH). Residues 146–195 (IHEKDTNSTTAAAPPSPLKRRRLSSKRKLSHDAESEDPGPAKKMVEDGQS) form a disordered region. S161 carries the phosphoserine modification. Residues 163-174 (LKRRRLSSKRKL) show a composition bias toward basic residues. Phosphoserine is present on residues S175 and S180. The segment covering 184–195 (GPAKKMVEDGQS) has biased composition (basic and acidic residues). The segment at 206-228 (FHCPVCFKEFVCKYELETHMETH) adopts a C2H2-type 4 zinc-finger fold. S229 carries the phosphoserine modification. 2 C2H2-type zinc fingers span residues 233–256 (LRCD…ALVH) and 314–336 (FVCD…RQSH). Glycyl lysine isopeptide (Lys-Gly) (interchain with G-Cter in SUMO2) cross-links involve residues K433, K500, K549, K564, K591, and K611. A Glycyl lysine isopeptide (Lys-Gly) (interchain with G-Cter in SUMO1); alternate cross-link involves residue K613. Residue K613 forms a Glycyl lysine isopeptide (Lys-Gly) (interchain with G-Cter in SUMO2); alternate linkage. A Glycyl lysine isopeptide (Lys-Gly) (interchain with G-Cter in SUMO2) cross-link involves residue K622. C2H2-type zinc fingers lie at residues 641 to 663 (YPCR…VRSH), 669 to 691 (YQCN…IRTH), 697 to 720 (YICK…RKKH), 751 to 782 (TVCR…GGCH), and 788 to 813 (FECK…QHLH). Residues K855, K883, and K911 each participate in a glycyl lysine isopeptide (Lys-Gly) (interchain with G-Cter in SUMO2) cross-link. Disordered regions lie at residues 939 to 991 (IPKS…SLET) and 1092 to 1177 (ADPG…AVDL). A compositionally biased stretch (basic and acidic residues) spans 944–961 (KKGDKDTVVPSDAKKPEP). S970 carries the phosphoserine modification. The segment covering 1097 to 1111 (SITSSNTVATDSPGS) has biased composition (polar residues). 3 positions are modified to phosphoserine: S1125, S1137, and S1138. Low complexity predominate over residues 1137–1146 (SSPEEALPTE). Basic residues predominate over residues 1155–1165 (SRKRGRKRGLR). Residues S1172, S1179, S1180, and S1230 each carry the phosphoserine modification. 4 disordered regions span residues 1195 to 1235 (TNKF…AEDR), 1273 to 1368 (HTDS…QSLD), 1383 to 1521 (SEAG…RKKV), and 1564 to 1670 (VRHQ…SPAA). The C2H2-type 12 zinc-finger motif lies at 1251–1273 (INCPHCPRVFPWASSLQRHMLTH). The span at 1273–1285 (HTDSQSDTDTLTT) shows a compositional bias: low complexity. The span at 1327 to 1346 (SEEEEEKETEENPEPEEECR) shows a compositional bias: acidic residues. A C2H2-type 13 zinc finger spans residues 1400–1422 (HACDTCGKNFKFLGTLSRHKKAH). Phosphoserine occurs at positions 1450 and 1452. Positions 1492-1507 (TAEKRGDGDKRPKTDS) are enriched in basic and acidic residues. 2 C2H2-type zinc fingers span residues 1520–1542 (KVCS…MRSH) and 1548–1570 (YKCQ…QRIH). Residues 1564 to 1580 (VRHQRIHQKARHSKHHG) show a composition bias toward basic residues. Phosphoserine is present on residues S1593 and S1606. Residues 1645–1660 (AEQAAEPSAPKEQASP) show a composition bias toward low complexity. S1667 carries the phosphoserine modification.

This sequence belongs to the krueppel C2H2-type zinc-finger protein family. Interacts with NEUROD1. Interacts with AR. As to expression, expressed in splenic B-cells.

The protein resides in the nucleus speckle. In terms of biological role, transcription factor that binds specifically to the RAS-responsive elements (RRE) of gene promoters. Represses the angiotensinogen gene. Negatively regulates the transcriptional activity of AR. Potentiates the transcriptional activity of NEUROD1. Binds specifically to the allelic variant of the CDKN2A promoter present in Balb/c mice, which leads to a down-regulation of CDKN2A expression in this strain, and, as a consequence, to an elevated susceptibility to pristane-induced tumors. Promotes brown adipocyte differentiation. May be involved in Ras/Raf-mediated cell differentiation by enhancing calcitonin expression. This is Ras-responsive element-binding protein 1 (Rreb1) from Mus musculus (Mouse).